A 306-amino-acid chain; its full sequence is Pantothenate kinase (306 aa).

91 to 98 (GSVAVGKS) contributes to the ATP binding site.

It belongs to the prokaryotic pantothenate kinase family.

It localises to the cytoplasm. It carries out the reaction (R)-pantothenate + ATP = (R)-4'-phosphopantothenate + ADP + H(+). The protein operates within cofactor biosynthesis; coenzyme A biosynthesis; CoA from (R)-pantothenate: step 1/5. The sequence is that of Pantothenate kinase from Streptococcus pneumoniae (strain 70585).